The chain runs to 474 residues: Ribulose bisphosphate carboxylase large chain (474 aa).

Substrate is bound by residues Asn-117 and Thr-167. Lys-169 (proton acceptor) is an active-site residue. Lys-171 provides a ligand contact to substrate. Residues Lys-195, Asp-197, and Glu-198 each contribute to the Mg(2+) site. Lys-195 is modified (N6-carboxylysine). His-288 functions as the Proton acceptor in the catalytic mechanism. Substrate contacts are provided by Arg-289, His-321, and Ser-373.

This sequence belongs to the RuBisCO large chain family. Type I subfamily. In terms of assembly, heterohexadecamer of 8 large chains and 8 small chains. Mg(2+) serves as cofactor.

The catalysed reaction is 2 (2R)-3-phosphoglycerate + 2 H(+) = D-ribulose 1,5-bisphosphate + CO2 + H2O. It carries out the reaction D-ribulose 1,5-bisphosphate + O2 = 2-phosphoglycolate + (2R)-3-phosphoglycerate + 2 H(+). Its function is as follows. RuBisCO catalyzes two reactions: the carboxylation of D-ribulose 1,5-bisphosphate, the primary event in carbon dioxide fixation, as well as the oxidative fragmentation of the pentose substrate. Both reactions occur simultaneously and in competition at the same active site. The chain is Ribulose bisphosphate carboxylase large chain from Hydrogenophilus thermoluteolus (Pseudomonas hydrogenothermophila).